The following is a 339-amino-acid chain: Carboxyvinyl-carboxyphosphonate phosphorylmutase, chloroplastic (339 aa).

Residues 1 to 30 constitute a chloroplast transit peptide; it reads MSMLMAVKTTSLCCSSLNLTASPTFRRNPR.

It belongs to the isocitrate lyase/PEP mutase superfamily.

Its subcellular location is the plastid. The protein resides in the chloroplast. The enzyme catalyses 1-carboxyvinyl carboxyphosphonate + H(+) = 3-(hydrohydroxyphosphoryl)pyruvate + CO2. This is Carboxyvinyl-carboxyphosphonate phosphorylmutase, chloroplastic from Arabidopsis thaliana (Mouse-ear cress).